The sequence spans 462 residues: Cysteine--tRNA ligase (462 aa).

Cys28 contributes to the Zn(2+) binding site. The 'HIGH' region signature appears at 30–40; it reads VTIYDLCHIGH. Zn(2+) is bound by residues Cys211, His236, and Glu240. The short motif at 268–272 is the 'KMSKS' region element; sequence KMSKS. Lys271 provides a ligand contact to ATP.

Belongs to the class-I aminoacyl-tRNA synthetase family. Monomer. Requires Zn(2+) as cofactor.

It localises to the cytoplasm. It catalyses the reaction tRNA(Cys) + L-cysteine + ATP = L-cysteinyl-tRNA(Cys) + AMP + diphosphate. The sequence is that of Cysteine--tRNA ligase from Aliivibrio salmonicida (strain LFI1238) (Vibrio salmonicida (strain LFI1238)).